The sequence spans 402 residues: uncharacterized protein (402 aa).

Residues 1–12 (MFQQLSASIRHN) are Cytoplasmic-facing. Residues 13-33 (AHIIFLCISWYFISSLASQVT) traverse the membrane as a helical segment. At 34–50 (KQVLTVCPLPLFLGEFQ) the chain is on the extracellular side. The chain crosses the membrane as a helical span at residues 51–71 (FIYTAVLAWFTCYIAYSFPGF). Over 72–103 (YRIFPNGTFPEYYIDDRETSRAARKESKLSSL) the chain is Cytoplasmic. The chain crosses the membrane as a helical span at residues 104 to 124 (IIPPSKPILQTVLPLGLFQFV). At 125 to 134 (GKYFGHTATS) the chain is on the extracellular side. A helical membrane pass occupies residues 135–155 (LVPVSTVASIKTLSPMFILLL). At 156–165 (QKILKISTLK) the chain is on the cytoplasmic side. The chain crosses the membrane as a helical span at residues 166-186 (ITLTLIFSLCTLVLGVWIIVQ). The Extracellular portion of the chain corresponds to 187 to 206 (EDNRSPASSNELREFSKYGV). Residues 207-227 (ICAMISMFIFVLQNIYGKTVF) traverse the membrane as a helical segment. The Cytoplasmic segment spans residues 228–271 (TYRSQTDESQSNSGFSRQESPLPLYEKLDEKLVAKKKPKSYDKL). The chain crosses the membrane as a helical span at residues 272-292 (TLMIYISLVGFCLSFGWFITL). At 293–353 (EFPVLFRYFF…TYSIANLMKR (61 aa)) the chain is on the extracellular side. A helical transmembrane segment spans residues 354-374 (FAIIAVSWVFIGRRITWLQVF). The Cytoplasmic segment spans residues 375-402 (GLVLNTLGLFLYERCTSQSKIKAKIRPE).

Belongs to the TPT transporter family.

Its subcellular location is the membrane. This is an uncharacterized protein from Saccharomyces cerevisiae (strain ATCC 204508 / S288c) (Baker's yeast).